Consider the following 641-residue polypeptide: Kelch-like protein 22 (641 aa).

The interval 1–25 is disordered; that stretch reads MAEDLETMKPSQAPQQPSLPQGSSK. Over residues 10-24 the composition is skewed to low complexity; the sequence is PSQAPQQPSLPQGSS. The BTB domain occupies 50–117; it reads FDVVLKVEGK…IYTSDLALSV (68 aa). Kelch repeat units follow at residues 299–349, 350–399, 400–446, 448–493, 494–544, and 545–593; these read CVVG…VLNN, FVYL…VLGD, FLYA…ALDG, MYVA…ALQE, KIYL…VLAK, and KIFV…VLTL.

As to quaternary structure, component of the BCR(KLHL22) E3 ubiquitin ligase complex, at least composed of cul3, klhl22 and rbx1.

The protein resides in the cytoplasm. It is found in the cytosol. The protein localises to the cytoskeleton. It localises to the microtubule organizing center. Its subcellular location is the centrosome. The protein resides in the spindle. It is found in the nucleus. The protein localises to the lysosome. Its pathway is protein modification; protein ubiquitination. In terms of biological role, substrate-specific adapter of a BCR (BTB-CUL3-RBX1) E3 ubiquitin ligase complex. The BCR(KLHL22) ubiquitin ligase complex could mediate the monoubiquitination of PLK1 and regulate its activity in spindle assembly checkpoint (SAC) and chromosome segregation. The BCR(KLHL22) ubiquitin ligase complex may also be responsible for the ubiquitin-dependent proteasomal degradation of DEPDC5 and the activation of the TORC1 pathway. This chain is Kelch-like protein 22 (klhl22), found in Xenopus tropicalis (Western clawed frog).